The sequence spans 549 residues: Glucose-6-phosphate isomerase (549 aa).

Glu-355 functions as the Proton donor in the catalytic mechanism. Catalysis depends on residues His-386 and Lys-514.

This sequence belongs to the GPI family.

It is found in the cytoplasm. The catalysed reaction is alpha-D-glucose 6-phosphate = beta-D-fructose 6-phosphate. The protein operates within carbohydrate biosynthesis; gluconeogenesis. It functions in the pathway carbohydrate degradation; glycolysis; D-glyceraldehyde 3-phosphate and glycerone phosphate from D-glucose: step 2/4. In terms of biological role, catalyzes the reversible isomerization of glucose-6-phosphate to fructose-6-phosphate. The protein is Glucose-6-phosphate isomerase of Salmonella agona (strain SL483).